The chain runs to 284 residues: RNase adapter protein RapZ (284 aa).

Residue 8–15 participates in ATP binding; it reads GRSGSGKS. A GTP-binding site is contributed by 56–59; sequence DVRN. Residues 266–284 are RNA-binding; that stretch reads RSRGKNVQSRHRTLEKRRS.

Belongs to the RapZ-like family. RapZ subfamily. Homotrimer.

Modulates the synthesis of GlmS, by affecting the processing and stability of the regulatory small RNA GlmZ. When glucosamine-6-phosphate (GlcN6P) concentrations are high in the cell, RapZ binds GlmZ and targets it to cleavage by RNase E. Consequently, GlmZ is inactivated and unable to activate GlmS synthesis. Under low GlcN6P concentrations, RapZ is sequestered and inactivated by an other regulatory small RNA, GlmY, preventing GlmZ degradation and leading to synthesis of GlmS. The protein is RNase adapter protein RapZ of Erwinia tasmaniensis (strain DSM 17950 / CFBP 7177 / CIP 109463 / NCPPB 4357 / Et1/99).